The sequence spans 575 residues: uncharacterized protein (575 aa).

Positions 1-28 (MSNLLWKSLVVSPAVLGATLLVSSAAIA) are cleaved as a signal peptide. Residues 87–151 (SVSQFSDVQP…DRVNELIATA (65 aa)) form the SLH domain. Residues 158–196 (KQDLATLQRLQEEFSAELATLRGRVDALEARTAELEANQ) adopt a coiled-coil conformation.

The protein belongs to the OprB family.

This is an uncharacterized protein from Nostoc sp. (strain PCC 7120 / SAG 25.82 / UTEX 2576).